The primary structure comprises 102 residues: Urease subunit beta (102 aa).

The protein belongs to the urease beta subunit family. As to quaternary structure, heterotrimer of UreA (gamma), UreB (beta) and UreC (alpha) subunits. Three heterotrimers associate to form the active enzyme.

Its subcellular location is the cytoplasm. The enzyme catalyses urea + 2 H2O + H(+) = hydrogencarbonate + 2 NH4(+). The protein operates within nitrogen metabolism; urea degradation; CO(2) and NH(3) from urea (urease route): step 1/1. This is Urease subunit beta from Methylibium petroleiphilum (strain ATCC BAA-1232 / LMG 22953 / PM1).